The chain runs to 267 residues: uncharacterized protein (267 aa).

Phosphoserine is present on residues Ser210 and Ser224.

As to expression, testis. Down-regulated in men with spermatocyte arrest.

Essential for normal spermatogenesis and male fertility. This is an uncharacterized protein from Homo sapiens (Human).